Here is a 459-residue protein sequence, read N- to C-terminus: Argininosuccinate lyase (459 aa).

It belongs to the lyase 1 family. Argininosuccinate lyase subfamily.

It is found in the cytoplasm. It carries out the reaction 2-(N(omega)-L-arginino)succinate = fumarate + L-arginine. Its pathway is amino-acid biosynthesis; L-arginine biosynthesis; L-arginine from L-ornithine and carbamoyl phosphate: step 3/3. This is Argininosuccinate lyase from Staphylococcus aureus (strain Mu3 / ATCC 700698).